A 125-amino-acid chain; its full sequence is S-adenosylmethionine decarboxylase proenzyme (125 aa).

Catalysis depends on Ser61, which acts as the Schiff-base intermediate with substrate; via pyruvic acid. Position 61 is a pyruvic acid (Ser); by autocatalysis (Ser61). The active-site Proton acceptor; for processing activity is the His66. The active-site Proton donor; for catalytic activity is the Cys81.

The protein belongs to the prokaryotic AdoMetDC family. Type 1 subfamily. In terms of assembly, heterotetramer of two alpha and two beta chains arranged as a dimer of alpha/beta heterodimers. Pyruvate serves as cofactor. Is synthesized initially as an inactive proenzyme. Formation of the active enzyme involves a self-maturation process in which the active site pyruvoyl group is generated from an internal serine residue via an autocatalytic post-translational modification. Two non-identical subunits are generated from the proenzyme in this reaction, and the pyruvate is formed at the N-terminus of the alpha chain, which is derived from the carboxyl end of the proenzyme. The post-translation cleavage follows an unusual pathway, termed non-hydrolytic serinolysis, in which the side chain hydroxyl group of the serine supplies its oxygen atom to form the C-terminus of the beta chain, while the remainder of the serine residue undergoes an oxidative deamination to produce ammonia and the pyruvoyl group blocking the N-terminus of the alpha chain.

The enzyme catalyses S-adenosyl-L-methionine + H(+) = S-adenosyl 3-(methylsulfanyl)propylamine + CO2. It participates in amine and polyamine biosynthesis; S-adenosylmethioninamine biosynthesis; S-adenosylmethioninamine from S-adenosyl-L-methionine: step 1/1. Functionally, catalyzes the decarboxylation of S-adenosylmethionine to S-adenosylmethioninamine (dcAdoMet), the propylamine donor required for the synthesis of the polyamines spermine and spermidine from the diamine putrescine. This chain is S-adenosylmethionine decarboxylase proenzyme, found in Prochlorococcus marinus (strain MIT 9313).